The following is a 1723-amino-acid chain: Homeobox protein 5 (1723 aa).

Low complexity predominate over residues 36-50 (QLQQPQHQPQHYQQQ). 9 disordered regions span residues 36–425 (QLQQ…APGT), 440–522 (SSSP…QLQQ), 543–756 (ENIT…PPLT), 878–978 (GTIV…TGSL), 1080–1214 (IFNN…SENN), 1226–1264 (VSLGSLPTNTPSSMEIEQQQQQQQQQQQQQQQQHLNQQQ), 1345–1399 (IVNN…TQTS), 1456–1498 (QQQQ…STTT), and 1513–1547 (HNQQVSPISPRSPRSPHGTSGDYNDGSQSPSSRRK). The segment covering 51–72 (DSFVSPNLDNNNPQIHVQSNNY) has biased composition (polar residues). 2 stretches are compositionally biased toward low complexity: residues 73-107 (NQNGFVGYNNSNNNNNNNQHMNNQYSNSFHNNNSS) and 114-212 (NNSS…NNNN). Polar residues-rich tracts occupy residues 223–237 (SQPTSPYNNPIQHNP) and 244–257 (GQHNPFNGNQMVMD). 2 stretches are compositionally biased toward low complexity: residues 258-284 (NNNNNNNNNNSNVFNSNSNSNVFNSNS) and 291-350 (NNNN…NNNN). Positions 300-351 (YNNNNNNNNNNNSNSNNNNNNNNNNNNNNNNNNNNNNNNNNNNNSNNNNNNQ) form a coiled coil. Positions 351-369 (QFSQSYDSTLGNNRFSSMM) are enriched in polar residues. Low complexity-rich tracts occupy residues 371 to 421 (QPIQ…LIGS) and 440 to 465 (SSSPTSSPSSPVKKGKSQSALALSSS). Positions 483–510 (MSSITNTNLKSTQASTLKESKRSNSSPN) are enriched in polar residues. Composition is skewed to low complexity over residues 511-522 (LKKQMQLQQLQQ), 544-571 (NITNNNNNNNNNNNNNNNNNNNNNITNN), and 581-593 (NSNNINQSSDSIN). The span at 632-655 (HISTTQQSPSLNGSTGGSMLTPTM) shows a compositional bias: polar residues. The segment covering 660–669 (LSGGGSGGGF) has biased composition (gly residues). Over residues 673–685 (ISPTGTTSNKDLQ) the composition is skewed to polar residues. 3 stretches are compositionally biased toward low complexity: residues 686–699 (SSPSPSPLLKSMSM), 710–727 (SMSSPLSPNSSLSSSNGL), and 734–745 (SNNMNSSGGIPT). Over residues 746-755 (PSTPTSPPPL) the composition is skewed to pro residues. Positions 882–928 (NPTNVNNNNINNNNNNNNNNNNNNNNNNNNNNNNNNNNTTTTTTTTT) are enriched in low complexity. The span at 929-945 (SANTVQSGTTSNSNLVF) shows a compositional bias: polar residues. 2 stretches are compositionally biased toward low complexity: residues 946–977 (QQTSNSNTLSPSQQQQQQTQQQQSINGSSTGS) and 1082–1146 (NNNN…SINS). 2 stretches are compositionally biased toward polar residues: residues 1147–1159 (PRPSTPTTLNSSG) and 1176–1187 (DISTGLMASSDQ). A coiled-coil region spans residues 1193 to 1270 (QQQQHQQLVN…NQQQILHQQL (78 aa)). Positions 1194-1214 (QQQHQQLVNNNNNNMNNSENN) are enriched in low complexity. Residues 1226–1242 (VSLGSLPTNTPSSMEIE) show a composition bias toward polar residues. Low complexity-rich tracts occupy residues 1243–1264 (QQQQQQQQQQQQQQQQHLNQQQ), 1347–1384 (NNQNNNNNDQNNNNNNNNNNNSTTNSNVNNNNNTTNTP), 1456–1480 (QQQQQQQETPHTPTSNSISSPRSSP), 1487–1498 (SNTNTTTTSTTT), and 1518–1528 (SPISPRSPRSP). A coiled-coil region spans residues 1431–1464 (VLQQQQQQQQQQQQQQQQQQQQQQQQQQQQQQET). Residues 1529–1543 (HGTSGDYNDGSQSPS) show a composition bias toward polar residues. The homeobox DNA-binding region spans 1543–1607 (SSRRKNRFTD…NKRARSRPSP (65 aa)). Residues 1553–1588 (FQIKRMNDCFENLDKNNNGKFTSEEICQIATELGLT) form the EF-hand domain. Disordered stretches follow at residues 1598–1625 (NKRARSRPSPRGQPTNPLTSSTNNGNNS) and 1661–1723 (LHQQ…TINE). Residues 1612–1625 (TNPLTSSTNNGNNS) are compositionally biased toward low complexity. The stretch at 1632–1702 (LQQQHLQQVQ…NNNNNNNNNN (71 aa)) forms a coiled coil. A compositionally biased stretch (polar residues) spans 1665-1675 (SANTTPQLNSM). Over residues 1676–1723 (NPNSINYNNNNNNNNNNNNNNNNNNNNNNNNNNNNNNIINNNITTINE) the composition is skewed to low complexity.

It is found in the nucleus. Putative transcription factor. The polypeptide is Homeobox protein 5 (hbx5-1) (Dictyostelium discoideum (Social amoeba)).